Here is a 333-residue protein sequence, read N- to C-terminus: 4-hydroxyproline epimerase (333 aa).

Cys-90 functions as the Proton acceptor in the catalytic mechanism. Substrate is bound by residues 91–92 (GH) and Asp-249. The active-site Proton donor is the Cys-253. Substrate is bound at residue 254–255 (GT).

Belongs to the proline racemase family. Homodimer.

It catalyses the reaction trans-4-hydroxy-L-proline = cis-4-hydroxy-D-proline. Its function is as follows. Allows intracellular utilization of 4-hydroxyproline, one of the major constituents of host collagen, by converting 4-hydroxy-L-proline to 4-hydroxy-D-proline, which can be further metabolized by intracellular 4-hydroxy-D-proline oxidases. Strong B-cell mitogen. Plays an important role in the regulation of intra- and extracellular amino acid pools, allowing the bacterium to profit from host precursors and enzymatic pathways. This chain is 4-hydroxyproline epimerase, found in Brucella canis (strain ATCC 23365 / NCTC 10854 / RM-666).